Here is a 602-residue protein sequence, read N- to C-terminus: Threonine--tRNA ligase (602 aa).

The catalytic stretch occupies residues 208–499 (DHRKLGTELK…LTEHCAGEFP (292 aa)). 3 residues coordinate Zn(2+): cysteine 300, histidine 351, and histidine 476.

The protein belongs to the class-II aminoacyl-tRNA synthetase family. Homodimer. The cofactor is Zn(2+).

It localises to the cytoplasm. It catalyses the reaction tRNA(Thr) + L-threonine + ATP = L-threonyl-tRNA(Thr) + AMP + diphosphate + H(+). In terms of biological role, catalyzes the attachment of threonine to tRNA(Thr) in a two-step reaction: L-threonine is first activated by ATP to form Thr-AMP and then transferred to the acceptor end of tRNA(Thr). Also edits incorrectly charged L-seryl-tRNA(Thr). The polypeptide is Threonine--tRNA ligase (Campylobacter jejuni (strain RM1221)).